The sequence spans 359 residues: Fructose-bisphosphate aldolase (359 aa).

Serine 50 is a D-glyceraldehyde 3-phosphate binding site. Aspartate 83 serves as the catalytic Proton donor. 4 residues coordinate Zn(2+): histidine 84, aspartate 105, glutamate 142, and histidine 198. Glycine 199 lines the dihydroxyacetone phosphate pocket. Histidine 232 contributes to the Zn(2+) binding site. Dihydroxyacetone phosphate-binding positions include 233 to 235 (GSS) and 275 to 278 (NIDT).

Belongs to the class II fructose-bisphosphate aldolase family. Homodimer. Zn(2+) is required as a cofactor.

It catalyses the reaction beta-D-fructose 1,6-bisphosphate = D-glyceraldehyde 3-phosphate + dihydroxyacetone phosphate. It functions in the pathway carbohydrate biosynthesis; Calvin cycle. The protein operates within carbohydrate degradation; glycolysis; D-glyceraldehyde 3-phosphate and glycerone phosphate from D-glucose: step 4/4. Catalyzes the aldol condensation of dihydroxyacetone phosphate (DHAP or glycerone-phosphate) with glyceraldehyde 3-phosphate (G3P) to form fructose 1,6-bisphosphate (FBP) in gluconeogenesis and the reverse reaction in glycolysis. In Sinorhizobium medicae (strain WSM419) (Ensifer medicae), this protein is Fructose-bisphosphate aldolase (cbbA).